Reading from the N-terminus, the 367-residue chain is GDP-perosamine synthase (367 aa).

The residue at position 181 (lysine 181) is an N6-(pyridoxal phosphate)lysine.

The protein belongs to the DegT/DnrJ/EryC1 family. As to quaternary structure, homotetramer. Pyridoxal 5'-phosphate serves as cofactor.

It catalyses the reaction GDP-alpha-D-perosamine + 2-oxoglutarate = GDP-4-dehydro-alpha-D-rhamnose + L-glutamate. It functions in the pathway bacterial outer membrane biogenesis; LPS O-antigen biosynthesis. Functionally, catalyzes the synthesis of GDP-perosamine from GDP-4-keto-6-deoxy-D-mannose and L-glutamate. Also shows weak activity with L-glutamine. In Vibrio cholerae, this protein is GDP-perosamine synthase.